A 1026-amino-acid chain; its full sequence is Multidrug resistance protein MdtC (1026 aa).

The next 11 helical transmembrane spans lie at Ile15–Ala35, Glu333–Leu353, Leu360–Cys380, Leu387–Leu407, Val431–Leu451, Phe463–Pro483, Leu528–Pro548, Leu853–Ser873, Leu897–Val917, Pro953–Gly973, and Ile984–Val1004.

It belongs to the resistance-nodulation-cell division (RND) (TC 2.A.6) family. MdtC subfamily. As to quaternary structure, part of a tripartite efflux system composed of MdtA, MdtB and MdtC. MdtC forms a heteromultimer with MdtB.

It localises to the cell inner membrane. The sequence is that of Multidrug resistance protein MdtC from Salmonella gallinarum (strain 287/91 / NCTC 13346).